The primary structure comprises 452 residues: Protein disulfide-isomerase TMX3 (452 aa).

The first 26 residues, 1 to 26, serve as a signal peptide directing secretion; it reads MAAAGLCFILAIVSSTSLLASVPVSA. One can recognise a Thioredoxin domain in the interval 27 to 128; it reads LVEDLDDSFK…KEDIVEFANR (102 aa). At 27–375 the chain is on the lumenal side; it reads LVEDLDDSFK…TVVSVFKSSP (349 aa). Active-site nucleophile residues include C53 and C56. The cysteines at positions 53 and 56 are disulfide-linked. Residues N258 and N313 are each glycosylated (N-linked (GlcNAc...) asparagine). Residues 376–396 traverse the membrane as a helical segment; the sequence is LLGCFLFGLPLGVISIMCYGI. The Cytoplasmic segment spans residues 397 to 452; the sequence is CTADTEDGSEEMTRKDVIDQNASDEGSDEEEEKGREITDVSDEDQQEKDFMEKKID. The disordered stretch occupies residues 405 to 452; it reads SEEMTRKDVIDQNASDEGSDEEEEKGREITDVSDEDQQEKDFMEKKID. Positions 443–452 are enriched in basic and acidic residues; it reads EKDFMEKKID. The short motif at 449–452 is the Di-lysine motif element; sequence KKID.

Belongs to the protein disulfide isomerase family.

Its subcellular location is the endoplasmic reticulum membrane. The enzyme catalyses Catalyzes the rearrangement of -S-S- bonds in proteins.. Probable disulfide isomerase, which participates in the folding of proteins containing disulfide bonds. May act as a dithiol oxidase. Acts as a regulator of endoplasmic reticulum-mitochondria contact sites via its ability to regulate redox signals. In Xenopus laevis (African clawed frog), this protein is Protein disulfide-isomerase TMX3 (tmx3).